The sequence spans 224 residues: Dimethyl sulfoxide reductase transcriptional activator (224 aa).

The HTH bat-type domain occupies 158-209 (LTDKQREAAAAAVAKGYYATPRGADLSDLATALGISKSAVSQRLSAVESKLA).

In terms of biological role, involved in activating dmsEABCD gene expression related to dimethyl sulfoxide (DMSO) reductase. Required for anaerobic respiration on dimethyl sulfoxide (DMSO) and trimethylamine N-oxide (TMAO). This is Dimethyl sulfoxide reductase transcriptional activator (dmsR) from Halobacterium salinarum (strain ATCC 700922 / JCM 11081 / NRC-1) (Halobacterium halobium).